A 252-amino-acid chain; its full sequence is Hydroxyacylglutathione hydrolase (252 aa).

Residues His-54, His-56, Asp-58, His-59, His-111, Asp-130, and His-170 each coordinate Zn(2+).

This sequence belongs to the metallo-beta-lactamase superfamily. Glyoxalase II family. As to quaternary structure, monomer. Zn(2+) serves as cofactor.

It carries out the reaction an S-(2-hydroxyacyl)glutathione + H2O = a 2-hydroxy carboxylate + glutathione + H(+). The protein operates within secondary metabolite metabolism; methylglyoxal degradation; (R)-lactate from methylglyoxal: step 2/2. In terms of biological role, thiolesterase that catalyzes the hydrolysis of S-D-lactoyl-glutathione to form glutathione and D-lactic acid. The chain is Hydroxyacylglutathione hydrolase from Francisella tularensis subsp. tularensis (strain FSC 198).